The following is a 443-amino-acid chain: Putative cytochrome bd menaquinol oxidase subunit I (443 aa).

The next 9 membrane-spanning stretches (helical) occupy residues 19–39, 60–80, 93–113, 125–145, 176–196, 219–239, 322–342, 357–377, and 405–425; these read IIFA…ELIY, VLLG…ALLW, LPFQ…SIYV, IVAV…ITNV, FFIT…FIVA, ALLL…LNGH, LFNA…IGVV, LIIF…GWIF, and VLFL…VYVL. H182 serves as a coordination point for heme b.

The protein belongs to the cytochrome ubiquinol oxidase subunit 1 family. The cofactor is heme b.

The protein resides in the cell membrane. Its function is as follows. May have a role in sporulation. Can compensate for the loss of cytochrome aa3. This Bacillus subtilis (strain 168) protein is Putative cytochrome bd menaquinol oxidase subunit I (ythA).